We begin with the raw amino-acid sequence, 224 residues long: MPGRAPLHTVPGALGPWLLGCLWAWTLCGLCSLGAVGAPRPCQAPQQWEGRQVMYQQSSGRNSRALLSYDGLNQRVRVLDERKALIPCKRLFEYILLYKDGVMFQIEQATKQCSKMTLTEPWDPLDIPQNSTFEDQYSIGGPQEQIMVQEWSDRKSARSYETWIGIYTVKDCYPVQETFTKNYSVILSTRFFDIQLGIKDPSVFTPPSTCQIAQLEKMSEDCSW.

The signal sequence occupies residues 1–37; the sequence is MPGRAPLHTVPGALGPWLLGCLWAWTLCGLCSLGAVG. Disulfide bonds link Cys-42-Cys-172, Cys-88-Cys-222, and Cys-113-Cys-210. Residues Asn-130 and Asn-182 are each glycosylated (N-linked (GlcNAc...) asparagine).

The protein belongs to the ependymin family. Homodimer. N-glycosylated; the glycan contains mannose-6-phosphate moieties.

It is found in the lysosome lumen. Its subcellular location is the secreted. Its function is as follows. Binds anionic lipids and gangliosides at acidic pH. The sequence is that of Mammalian ependymin-related protein 1 (EPDR1) from Macaca fascicularis (Crab-eating macaque).